The chain runs to 218 residues: N-(5'-phosphoribosyl)anthranilate isomerase (218 aa).

It belongs to the TrpF family.

The enzyme catalyses N-(5-phospho-beta-D-ribosyl)anthranilate = 1-(2-carboxyphenylamino)-1-deoxy-D-ribulose 5-phosphate. It participates in amino-acid biosynthesis; L-tryptophan biosynthesis; L-tryptophan from chorismate: step 3/5. The sequence is that of N-(5'-phosphoribosyl)anthranilate isomerase from Bordetella pertussis (strain Tohama I / ATCC BAA-589 / NCTC 13251).